Consider the following 20-residue polypeptide: Sperm acrosome membrane-associated protein 3, processed form (20 aa).

The protein belongs to the glycosyl hydrolase 22 family.

In terms of biological role, sperm surface membrane protein that may be involved in sperm-egg plasma membrane adhesion and fusion during fertilization. It could be a potential receptor for the egg oligosaccharide residue N-acetylglucosamine, which is present in the extracellular matrix over the egg plasma membrane. In Vulpes vulpes (Red fox), this protein is Sperm acrosome membrane-associated protein 3, processed form (SPACA3).